Consider the following 268-residue polypeptide: Zwei Ig domain protein zig-8 (268 aa).

An N-terminal signal peptide occupies residues 1 to 21; it reads MRRFSNICVILFSFLYATGHG. 2 consecutive Ig-like C2-type domains span residues 40–128 and 140–251; these read PSQT…NTVY and PSPS…NSAT. The cysteines at positions 57 and 118 are disulfide-linked. N82, N155, N164, and N191 each carry an N-linked (GlcNAc...) asparagine glycan. Residues C165 and C226 are joined by a disulfide bond.

In terms of tissue distribution, expressed in PVT neurons and pharyngeal muscles.

It localises to the secreted. Functionally, together with zig-5, required postembryonically to maintain the position of ASI and ASH head neuron cell bodies and ventral nerve cord axons of PVQ, PVP and HSN neurons by preventing their displacement that could occur during body growth and movement. May act by reducing L1CAM-like protein sax-7 (long isoform) adhesion. The sequence is that of Zwei Ig domain protein zig-8 from Caenorhabditis elegans.